The following is a 2442-amino-acid chain: Centrosome-associated protein CEP250 (2442 aa).

Coiled coils occupy residues 95–158 (NLDE…KESQ), 244–352 (AQLL…TQVM), 395–1172 (LTRR…EQQP), and 1243–2227 (SALH…KERL). Basic and acidic residues-rich tracts occupy residues 1273–1289 (LTDTEAEKSQVHTELQD) and 1699–1715 (LTTQRQLMQERAEEGKG). Disordered stretches follow at residues 1273–1308 (LTDTEAEKSQVHTELQDLQRQLSQNQEEKSKWEGKQ), 1699–1725 (LTTQRQLMQERAEEGKGPSKAQRGSLE), and 1820–1839 (EALQQEQQQAQGQEERVKEK). Positions 1820-1831 (EALQQEQQQAQG) are enriched in low complexity. A Phosphoserine modification is found at S2138. T2218 bears the Phosphothreonine mark. A disordered region spans residues 2223–2244 (EKERLHSPGATSTAELGSRGEQ). A phosphoserine mark is found at S2229, S2252, and S2322. Residues 2262-2376 (GMEKQSWRQR…RKQKQDYITR (115 aa)) are a coiled coil. Disordered stretches follow at residues 2307 to 2345 (RRKLKREAMRAAQAGSLEISKATASSPTQQDGRGQKNSD) and 2416 to 2442 (ESLTQSLTSPGPVLLHPSPSTTQAASR). Positions 2328 to 2338 (ATASSPTQQDG) are enriched in polar residues. Phosphoserine; by NEK2 occurs at positions 2417 and 2421. Polar residues predominate over residues 2433–2442 (SPSTTQAASR).

Monomer and homodimer. Forms a complex in vitro with both NEK2 kinase and the PPP1CC catalytic subunit of protein phosphatase 1 (PP1). Interacts with CEP135. Interacts with CROCC/rootletin. Interacts with CNTLN. Interacts with NIN (via C-terminus). Interacts with CCDC102B (via N-terminus); the interaction results in recruitment of CCDC102B to the proximal ends of centrioles. Differentially phosphorylated during cell cycle. Phosphorylation may regulate association/dissociation from centrosome. During M phase of mitosis, C-terminal part is phosphorylated by NEK2, suggesting that it may trigger the dissociation from the mitotic centrosome. Dephosphorylated in vitro by the PP1 phosphatase. In terms of tissue distribution, ubiquitously and weakly expressed.

It localises to the cytoplasm. The protein localises to the perinuclear region. It is found in the cytoskeleton. Its subcellular location is the microtubule organizing center. The protein resides in the centrosome. It localises to the centriole. The protein localises to the cilium basal body. It is found in the cell projection. Its subcellular location is the cilium. The protein resides in the photoreceptor outer segment. It localises to the photoreceptor inner segment. In terms of biological role, plays an important role in centrosome cohesion during interphase. Recruits CCDC102B to the proximal ends of centrioles. Maintains centrosome cohesion by forming intercentriolar linkages. Accumulates at the proximal end of each centriole, forming supramolecular assemblies with viscous material properties that promote organelle cohesion. May be involved in ciliogenesis. The sequence is that of Centrosome-associated protein CEP250 (CEP250) from Homo sapiens (Human).